The sequence spans 359 residues: MSSMYHDYDHLTASGKGLWSKFYGLVDAAVLLYDEIQRRGKIVSEEESQKRIFCLFPRRKRSSLVKRQQKLNGGFISFTSSSLIDLNQLPTDSEIEDPQTSDSQMKTLQNSSSEPCTSLVLFDYKTAESEKMEAKTLQNPSSELCSSLVLSDYKMAESEKMETKDPPNPLSLCLTGNTSRKRRAVEERKRTGGFKKAKVAPFPGTARDTPKWLVKVMRDMKEAKDAKLIFEKTLFVTDINPTQNRLSMPFNNLLQNDFLTSVESRIIKEDINNNKKIGVGAILVDQRSVKWGVMLKRWELKKESGKGSWNYNLICGWNDVVEANGLKEGDNISVWSFRCRGVLCFAMEQSSSSLALCLC.

2 disordered regions span residues 92–111 (DSEI…LQNS) and 159–192 (EKME…KRTG). The segment covering 100–111 (TSDSQMKTLQNS) has biased composition (polar residues). The segment at residues 250–351 (FNNLLQNDFL…VLCFAMEQSS (102 aa)) is a DNA-binding region (TF-B3).

It is found in the nucleus. The protein is Putative B3 domain-containing protein At3g24850 of Arabidopsis thaliana (Mouse-ear cress).